Reading from the N-terminus, the 111-residue chain is Probable 4-amino-4-deoxy-L-arabinose-phosphoundecaprenol flippase subunit ArnE (111 aa).

3 helical membrane passes run 37–57 (LIWL…WLKL), 65–85 (QAYP…HFFF), and 91–111 (LQHW…GQGI).

This sequence belongs to the ArnE family. As to quaternary structure, heterodimer of ArnE and ArnF.

The protein localises to the cell inner membrane. Its pathway is bacterial outer membrane biogenesis; lipopolysaccharide biosynthesis. Functionally, translocates 4-amino-4-deoxy-L-arabinose-phosphoundecaprenol (alpha-L-Ara4N-phosphoundecaprenol) from the cytoplasmic to the periplasmic side of the inner membrane. This is Probable 4-amino-4-deoxy-L-arabinose-phosphoundecaprenol flippase subunit ArnE from Hamiltonella defensa subsp. Acyrthosiphon pisum (strain 5AT).